A 1162-amino-acid polypeptide reads, in one-letter code: MAAARNATPTPQNGRDASRLSFAKITDTLTVPDLLALQTESFDWLVGSDAWKRRVEEGTKQGRTDLALNSGLEEIFEEISPIEDLGETMQLGFTNPYLEEQKYSIDECKERGKTYSAPLYVEAEFMNHLTGEIKTQTVFMGDFPLMTEKGTFIINGTERVVVSQLVRSPGVYFERQQEKTSDKDIYSARVIPSRGAWLEFEIDKRDQVGVRIDRKRKQSVTVFLKALGLTSEQILEEFKGVASIELTLEKDSILTKEEALKDIYRKLRPGEQVAAEAARALLDNFYFNPKRYDLAKVGRYKINRKLGIDKQLTDSVLTVEDILATIKYLVSLHANETKMNGTRDGKPVELRLDVDDIDHFGNRRIRAVGELIQNQVRTGLSRMERVVRERMTTQDIEAITPQTLINVRPVVAAIKEFFGTSQLSQFMDQNNPLAGLTHKRRLSALGPGGLSRERAGVEVRDVHPSHYGRMCPIETPEGPNIGLIGSLASFARINSFGFIETPYRRVVDGVVTDQIDYLTASEEDEFLVAQANAPLTKDFRFAEDRVLVRPKGGEVELVAKENVHYMDVSPRQMVSVATSLIPFLEHDDANRALMGANMQRQAVPLLRSESPLVGTGMEGYAAIDAGDVLTADASGVVAEVSAEVVTIQLDEGGTQTYYLRKFDRSNQGTSYNHRVLVSAGDRIEAGEVIADGPATENGELALGKNLLVAFMPWEGHNFEDAIILSQNLVKDDTLSSIHIEEYEVDARDTKLGKEEITRDLPNVSPELLADLDERGIIRIGAEVRPGDILVGKVTPKGETELSAEERLLRAIFNEKSREVRDTSLKVPHGEQGTIIGVKVFDSQDGDDELGSGVNQRVVVFIAQKRKITEGDKLAGRHGNKGVISKILPVEDMPFLADGTPVDVILNPLGIPGRMNFGQVLETHLGWSAKQGWEVEGKPKWAERLPDHARQAPAGTKVATPVFDGALEEEIAGLLDSTTVTRDGDRLIGSSGKTRLFDGRSGEPFPEPVSVGYMYILKLHHLVDDKIHARSTGPYSMITQQPLGGKAQFGGQRFGEMEVWALEAYGAAYALQELLTIKSDDILGRVKVYEAIVKGENIQEPGIPESFKVLIKEMQSLCLNVEVLSADGQAVSLRDTDDEVFRAAEELGINISTRFESSSIDDI.

The protein belongs to the RNA polymerase beta chain family. The RNAP catalytic core consists of 2 alpha, 1 beta, 1 beta' and 1 omega subunit. When a sigma factor is associated with the core the holoenzyme is formed, which can initiate transcription.

It catalyses the reaction RNA(n) + a ribonucleoside 5'-triphosphate = RNA(n+1) + diphosphate. Functionally, DNA-dependent RNA polymerase catalyzes the transcription of DNA into RNA using the four ribonucleoside triphosphates as substrates. This chain is DNA-directed RNA polymerase subunit beta, found in Clavibacter sepedonicus (Clavibacter michiganensis subsp. sepedonicus).